A 442-amino-acid chain; its full sequence is DNA N(6)-methyladenine demethylase ALKBH1D (442 aa).

A compositionally biased stretch (polar residues) spans 135–144; the sequence is SMVHFDSTNP. Positions 135-185 are disordered; the sequence is SMVHFDSTNPSSSSKSSQSQNLKIRKVRNHRNSGFKSRDQSPQRIKDPPPF. Residues 145–154 are compositionally biased toward low complexity; sequence SSSSKSSQSQ. Residues 157-167 show a composition bias toward basic residues; the sequence is KIRKVRNHRNS. The segment covering 170 to 183 has biased composition (basic and acidic residues); it reads KSRDQSPQRIKDPP. One can recognise a Fe2OG dioxygenase domain in the interval 332–442; it reads SPDICIVNFY…GRLNLTFRHF (111 aa). 339–341 provides a ligand contact to 2-oxoglutarate; that stretch reads NFY. Positions 350, 352, and 410 each coordinate Fe cation. Residue 434-440 coordinates 2-oxoglutarate; it reads RLNLTFR.

The protein belongs to the alkB family. Requires Fe(2+) as cofactor. In terms of tissue distribution, expressed at low levels in roots, seedlings and rosette leaves, but barely in cauline leaves, stems, siliques and flowers.

It localises to the nucleus. It is found in the cytoplasm. The enzyme catalyses an N(6)-methyl-2'-deoxyadenosine in DNA + 2-oxoglutarate + O2 = a 2'-deoxyadenosine in DNA + formaldehyde + succinate + CO2. Its function is as follows. Dioxygenase that catalyzes DNA N(6)-methyladenine (6 mA) demethylation to modulate gene expression and regulate seed germination. This is DNA N(6)-methyladenine demethylase ALKBH1D from Arabidopsis thaliana (Mouse-ear cress).